The primary structure comprises 160 residues: Cytochrome c-type biogenesis protein CcmE (160 aa).

Residues 1 to 8 lie on the Cytoplasmic side of the membrane; it reads MSAPRKTR. Residues 9 to 29 traverse the membrane as a helical; Signal-anchor for type II membrane protein segment; that stretch reads LYAILAVICGAVLTVALTLYA. At 30-160 the chain is on the periplasmic side; the sequence is LSSNIDLFYT…PAAVTEGKRL (131 aa). Heme is bound by residues His-130 and Tyr-134.

Belongs to the CcmE/CycJ family.

It is found in the cell inner membrane. In terms of biological role, heme chaperone required for the biogenesis of c-type cytochromes. Transiently binds heme delivered by CcmC and transfers the heme to apo-cytochromes in a process facilitated by CcmF and CcmH. In Pectobacterium carotovorum subsp. carotovorum (strain PC1), this protein is Cytochrome c-type biogenesis protein CcmE.